The chain runs to 435 residues: Trigger factor (435 aa).

The PPIase FKBP-type domain maps to 183 to 263 (GDFINVDVTI…VKTIWQGNMP (81 aa)).

The protein belongs to the FKBP-type PPIase family. Tig subfamily.

The protein resides in the cytoplasm. The enzyme catalyses [protein]-peptidylproline (omega=180) = [protein]-peptidylproline (omega=0). In terms of biological role, involved in protein export. Acts as a chaperone by maintaining the newly synthesized protein in an open conformation. Functions as a peptidyl-prolyl cis-trans isomerase. The chain is Trigger factor from Protochlamydia amoebophila (strain UWE25).